Consider the following 367-residue polypeptide: D-alanine--D-alanine ligase (367 aa).

The ATP-grasp domain occupies 139 to 340 (KLILKEKNIP…FSQVIDNMIS (202 aa)). 169 to 224 (KEVLEYPMIVKPARLGSSIGVKKVNDKCELEEAIETAFSFDDKVIVEKWIDSRELN) is a binding site for ATP. Mg(2+) is bound by residues Asp298, Glu311, and Asn313.

Belongs to the D-alanine--D-alanine ligase family. Mg(2+) serves as cofactor. Requires Mn(2+) as cofactor.

It is found in the cytoplasm. The catalysed reaction is 2 D-alanine + ATP = D-alanyl-D-alanine + ADP + phosphate + H(+). It participates in cell wall biogenesis; peptidoglycan biosynthesis. Functionally, cell wall formation. The chain is D-alanine--D-alanine ligase from Thermosipho africanus (strain TCF52B).